The sequence spans 386 residues: WD repeat-containing protein 89 (386 aa).

WD repeat units follow at residues 21–65, 68–106, 111–155, 167–207, 213–253, and 318–357; these read KEPT…VIRE, GYPG…GKPV, GYPS…QDLS, THSD…EDDA, NSVS…TDEP, and GHAA…KTFT.

The sequence is that of WD repeat-containing protein 89 (WDR89) from Bos taurus (Bovine).